We begin with the raw amino-acid sequence, 173 residues long: CKLF-like MARVEL transmembrane domain-containing protein 8 (173 aa).

One can recognise an MARVEL domain in the interval 36-168 (FLRTPPGLLI…NTYFSFIAWR (133 aa)). 4 helical membrane passes run 41 to 61 (PGLL…LIAG), 70 to 90 (FGWV…FLIV), 105 to 125 (TTVG…AAIV), and 147 to 167 (FFAF…FIAW).

Belongs to the chemokine-like factor family.

It is found in the membrane. The sequence is that of CKLF-like MARVEL transmembrane domain-containing protein 8 (Cmtm8) from Mus musculus (Mouse).